Here is a 163-residue protein sequence, read N- to C-terminus: Nucleotide-binding protein BBR47_25280 (163 aa).

The protein belongs to the YajQ family.

In terms of biological role, nucleotide-binding protein. This chain is Nucleotide-binding protein BBR47_25280, found in Brevibacillus brevis (strain 47 / JCM 6285 / NBRC 100599).